A 421-amino-acid chain; its full sequence is E3 ubiquitin protein ligase DRIP1 (421 aa).

The RING-type zinc finger occupies 16–57 (CSICDNILRDATTISECLHTFCRKCIYEKITEDEIETCPVCN). Composition is skewed to polar residues over residues 106–121 (ISSL…AQAG) and 157–172 (ESTS…TQNK). Disordered regions lie at residues 106–198 (ISSL…WDSK) and 216–307 (PLKS…QERR). Over residues 178–198 (SCKESISNKENKDGDEPWDSK) the composition is skewed to basic and acidic residues. Over residues 218 to 227 (KSSASQGSGS) the composition is skewed to low complexity. Positions 244 to 253 (TKTKNKKRKC) are enriched in basic residues. Residues 262 to 271 (NGDPTTSETV) are compositionally biased toward polar residues. Over residues 274–284 (KRMRTTQRKRS) the composition is skewed to basic residues. Residues 285–294 (ATTLGDSRNL) are compositionally biased toward polar residues.

Interacts with DREB2A. Autoubiquitinated. In terms of tissue distribution, expressed in roots, leaves and flowers.

The protein localises to the nucleus. It carries out the reaction S-ubiquitinyl-[E2 ubiquitin-conjugating enzyme]-L-cysteine + [acceptor protein]-L-lysine = [E2 ubiquitin-conjugating enzyme]-L-cysteine + N(6)-ubiquitinyl-[acceptor protein]-L-lysine.. The protein operates within protein modification; protein ubiquitination. Functionally, E3 ubiquitin-protein ligase that acts as a negative regulator of the response to water stress. Mediates ubiquitination and subsequent proteasomal degradation of the drought-induced transcriptional activator DREB2A. Functionally redundant with DRIP2. This Arabidopsis thaliana (Mouse-ear cress) protein is E3 ubiquitin protein ligase DRIP1 (DRIP1).